Consider the following 396-residue polypeptide: Acetate kinase (396 aa).

Residue asparagine 8 participates in Mg(2+) binding. Residue lysine 15 participates in ATP binding. Arginine 89 contacts substrate. The active-site Proton donor/acceptor is the aspartate 146. Residues 206–210 (HIGNG), 283–285 (DMR), and 331–335 (GMGEN) contribute to the ATP site. Glutamate 383 provides a ligand contact to Mg(2+).

This sequence belongs to the acetokinase family. As to quaternary structure, homodimer. Mg(2+) is required as a cofactor. Mn(2+) serves as cofactor.

Its subcellular location is the cytoplasm. It carries out the reaction acetate + ATP = acetyl phosphate + ADP. It participates in metabolic intermediate biosynthesis; acetyl-CoA biosynthesis; acetyl-CoA from acetate: step 1/2. Catalyzes the formation of acetyl phosphate from acetate and ATP. Can also catalyze the reverse reaction. This is Acetate kinase from Streptococcus uberis (strain ATCC BAA-854 / 0140J).